Consider the following 883-residue polypeptide: Phosphoenolpyruvate carboxylase (883 aa).

Catalysis depends on residues His138 and Lys546.

The protein belongs to the PEPCase type 1 family. As to quaternary structure, homotetramer. Requires Mg(2+) as cofactor.

It carries out the reaction oxaloacetate + phosphate = phosphoenolpyruvate + hydrogencarbonate. With respect to regulation, the enzyme has distinct binding sites for each of the allosteric effectors such as acetyl-CoA, fructose 1,6-bisphosphate, guanosine 3'-diphosphate 5'-diphosphate, long chain fatty acids, and L-aspartate. Functionally, forms oxaloacetate, a four-carbon dicarboxylic acid source for the tricarboxylic acid cycle. In Escherichia coli O157:H7, this protein is Phosphoenolpyruvate carboxylase.